Here is a 498-residue protein sequence, read N- to C-terminus: MASQGTKRSYEQMETDGERQNATEIRASVGKMIDGIGRFYIQMCTELKLSDYEGRLIQNSLTIERMVLSAFDERRNRYLEEHPSAGKDPKKTGGPIYRRVDGKWMRELILYDKEEIRRIWRQANNGDDATRGLTHMMIWHSNLNDATYQRTRALVRTGMDPRMCSLMQGSTLPRRSGAAGAAVKGVGTMVMELIRMIKRGINDRNFWRGENGRKTRSAYERMCNILKGKFQTAAQRAMMDQVRESRNPGNAEIEDLIFSARSALILRGSVAHKSCLPACVYGPAVSSGYDFEKEGYSLVGIDPFKLLQNSQVYSLIRPNENPAHKSQLVWMACHSAAFEDLRLFSFIRGTKVCPRGKLSTRGVQIASNENMDTMESSTLELRSRYWAIRTRSGGNTNQQRASAGQISVQPTFSVQRNLPFEKSTVMAAFTGNTEGRTSDMRAEIIRMMEGAKPEEVSFRGRGVFELSDEKATNPIVPSFDMSNEGSYFFGDNAEEYDN.

A Unconventional nuclear localization signal motif is present at residues 1-18; the sequence is MASQGTKRSYEQMETDGE. The segment at 1-21 is disordered; it reads MASQGTKRSYEQMETDGERQN. Residues 8 to 21 are compositionally biased toward basic and acidic residues; the sequence is RSYEQMETDGERQN. The Bipartite nuclear localization signal signature appears at 198 to 216; it reads KRGINDRNFWRGENGRKTR.

It belongs to the influenza viruses nucleoprotein family. Homomultimerizes to form the nucleocapsid. May bind host exportin-1/XPO1. Binds to viral genomic RNA. Protein-RNA contacts are mediated by a combination of electrostatic interactions between positively charged residues and the phosphate backbone and planar interactions between aromatic side chains and bases. Late in virus-infected cells, may be cleaved from a 56-kDa protein to a 53-kDa protein by a cellular caspase. This cleavage might be a marker for the onset of apoptosis in infected cells or have a specific function in virus host interaction.

Its subcellular location is the virion. It is found in the host nucleus. Encapsidates the negative strand viral RNA, protecting it from nucleases. The encapsidated genomic RNA is termed the ribonucleoprotein (RNP) and serves as template for transcription and replication. The RNP needs to be localized in the host nucleus to start an infectious cycle, but is too large to diffuse through the nuclear pore complex. NP comprises at least 2 nuclear localization signals that are responsible for the active RNP import into the nucleus through cellular importin alpha/beta pathway. Later in the infection, nclear export of RNPs are mediated through viral proteins NEP interacting with M1 which binds nucleoproteins. It is possible that nucleoprotein binds directly host exportin-1/XPO1 and plays an active role in RNPs nuclear export. M1 interaction with RNP seems to hide nucleoprotein's nuclear localization signals. Soon after a virion infects a new cell, M1 dissociates from the RNP under acidification of the virion driven by M2 protein. Dissociation of M1 from RNP unmasks nucleoprotein's nuclear localization signals, targeting the RNP to the nucleus. The protein is Nucleoprotein of Influenza A virus (strain A/Shanghai/31/1980 H3N2).